Reading from the N-terminus, the 532-residue chain is uncharacterized protein (532 aa).

5 helical membrane-spanning segments follow: residues 11–31, 51–71, 126–146, 147–167, and 231–253; these read YLSH…ALII, IEPF…KIFF, LIDI…YTLW, ILYN…IIVF, and YVES…VLLI. Residues 315-531 enclose the ABC transporter domain; the sequence is ICINKLVYEY…MIIPMNNGII (217 aa). 349-356 provides a ligand contact to ATP; sequence GKSGSGKS.

Its subcellular location is the membrane. This is an uncharacterized protein from Acanthamoeba polyphaga mimivirus (APMV).